Here is a 127-residue protein sequence, read N- to C-terminus: Aspartate 1-decarboxylase (127 aa).

S25 (schiff-base intermediate with substrate; via pyruvic acid) is an active-site residue. Residue S25 is modified to Pyruvic acid (Ser). Substrate is bound at residue T57. Y58 (proton donor) is an active-site residue. 73–75 (GAA) contacts substrate.

The protein belongs to the PanD family. Heterooctamer of four alpha and four beta subunits. The cofactor is pyruvate. In terms of processing, is synthesized initially as an inactive proenzyme, which is activated by self-cleavage at a specific serine bond to produce a beta-subunit with a hydroxyl group at its C-terminus and an alpha-subunit with a pyruvoyl group at its N-terminus.

It is found in the cytoplasm. The enzyme catalyses L-aspartate + H(+) = beta-alanine + CO2. The protein operates within cofactor biosynthesis; (R)-pantothenate biosynthesis; beta-alanine from L-aspartate: step 1/1. Catalyzes the pyruvoyl-dependent decarboxylation of aspartate to produce beta-alanine. In Bacillus cereus (strain ATCC 10987 / NRS 248), this protein is Aspartate 1-decarboxylase.